We begin with the raw amino-acid sequence, 646 residues long: Cell surface glycoprotein MUC18 (646 aa).

Residues 1–23 (MGLPRLVCAFLLAACCCCPRVAG) form the signal peptide. Ig-like V-type domains are found at residues 24–129 (VPGE…YRIQ) and 139–242 (PNIQ…REVT). The Extracellular portion of the chain corresponds to 24-559 (VPGEAEQPAP…RKLPEPESRG (536 aa)). Cystine bridges form between Cys48/Cys116, Cys161/Cys223, Cys272/Cys320, and Cys365/Cys407. The N-linked (GlcNAc...) asparagine glycan is linked to Asn56. 3 consecutive Ig-like C2-type domains span residues 244–330 (PVFY…TMIS), 335–424 (PQEL…QLVN), and 430–510 (PPWM…KNTS). Residues 278–299 (PPPHFSISKQNPSTREAEEETT) are disordered. N-linked (GlcNAc...) asparagine glycans are attached at residues Asn418, Asn449, Asn467, Asn508, Asn518, Asn527, and Asn544. Cysteines 452 and 499 form a disulfide. A disordered region spans residues 525–554 (DSNTTTGLSTSTASPHTRANSTSTERKLPE). The span at 533–547 (STSTASPHTRANSTS) shows a compositional bias: polar residues. A helical membrane pass occupies residues 560–583 (VVIVAVIVCILVLAVLGAVLYFLY). Residues 584–646 (KKGKLPCRRS…QGEKYIDLRH (63 aa)) are Cytoplasmic-facing. Ser606, Ser614, and Ser628 each carry phosphoserine. The disordered stretch occupies residues 620 to 646 (EMGLLQGSSGDKRAPGDQGEKYIDLRH). Positions 629-646 (GDKRAPGDQGEKYIDLRH) are enriched in basic and acidic residues.

As to expression, detected in endothelial cells in vascular tissue throughout the body. May appear at the surface of neural crest cells during their embryonic migration. Appears to be limited to vascular smooth muscle in normal adult tissues. Associated with tumor progression and the development of metastasis in human malignant melanoma. Expressed most strongly on metastatic lesions and advanced primary tumors and is only rarely detected in benign melanocytic nevi and thin primary melanomas with a low probability of metastasis.

The protein localises to the membrane. Plays a role in cell adhesion, and in cohesion of the endothelial monolayer at intercellular junctions in vascular tissue. Its expression may allow melanoma cells to interact with cellular elements of the vascular system, thereby enhancing hematogeneous tumor spread. Could be an adhesion molecule active in neural crest cells during embryonic development. Acts as a surface receptor that triggers tyrosine phosphorylation of FYN and PTK2/FAK1, and a transient increase in the intracellular calcium concentration. The protein is Cell surface glycoprotein MUC18 (MCAM) of Homo sapiens (Human).